The following is a 154-amino-acid chain: MVKAIAVLKGDAGVSGVVHFEQEADAAVTTISWNITGFEPNTEHGFHIHEFGDVTNGCTSSGSHFNPFKKTHGSPEDENRHVGDMGNVLADANGVAVGSAKDPLIKIFGPTSILGRTVVVHAGKDDLGRGGNEESLKTGNAGPRPACGVIGIAN.

Cu cation is bound by residues His47, His49, and His64. A disulfide bond links Cys58 and Cys147. His64, His72, His81, and Asp84 together coordinate Zn(2+). His121 contacts Cu cation. A substrate-binding site is contributed by Arg144.

The protein belongs to the Cu-Zn superoxide dismutase family. As to quaternary structure, homodimer. It depends on Cu cation as a cofactor. Zn(2+) is required as a cofactor.

It localises to the cytoplasm. It carries out the reaction 2 superoxide + 2 H(+) = H2O2 + O2. Its function is as follows. Destroys radicals which are normally produced within the cells and which are toxic to biological systems. This is Superoxide dismutase [Cu-Zn] (SOD1) from Eremothecium gossypii (strain ATCC 10895 / CBS 109.51 / FGSC 9923 / NRRL Y-1056) (Yeast).